Here is an 817-residue protein sequence, read N- to C-terminus: Probable inorganic carbon transporter subunit DabA (817 aa).

Zn(2+)-binding residues include Cys301, Asp303, His491, and Cys506. 2 disordered regions span residues 598-617 (NTSVDEGRPAAAVRETERRA) and 794-817 (GWHARPAPDASTATKAPASAGVPS).

The protein belongs to the inorganic carbon transporter (TC 9.A.2) DabA family. As to quaternary structure, forms a complex with DabB. It depends on Zn(2+) as a cofactor.

It is found in the cell inner membrane. Part of an energy-coupled inorganic carbon pump. The sequence is that of Probable inorganic carbon transporter subunit DabA from Salinibacter ruber (strain DSM 13855 / M31).